Here is a 172-residue protein sequence, read N- to C-terminus: Large ribosomal subunit protein uL10 (172 aa).

Belongs to the universal ribosomal protein uL10 family. Part of the ribosomal stalk of the 50S ribosomal subunit. The N-terminus interacts with L11 and the large rRNA to form the base of the stalk. The C-terminus forms an elongated spine to which L12 dimers bind in a sequential fashion forming a multimeric L10(L12)X complex.

In terms of biological role, forms part of the ribosomal stalk, playing a central role in the interaction of the ribosome with GTP-bound translation factors. The sequence is that of Large ribosomal subunit protein uL10 (rplJ) from Caulobacter vibrioides (strain ATCC 19089 / CIP 103742 / CB 15) (Caulobacter crescentus).